A 145-amino-acid chain; its full sequence is D-aminoacyl-tRNA deacylase (145 aa).

A Gly-cisPro motif, important for rejection of L-amino acids motif is present at residues 137–138; the sequence is GP.

This sequence belongs to the DTD family. As to quaternary structure, homodimer.

The protein localises to the cytoplasm. The enzyme catalyses glycyl-tRNA(Ala) + H2O = tRNA(Ala) + glycine + H(+). It catalyses the reaction a D-aminoacyl-tRNA + H2O = a tRNA + a D-alpha-amino acid + H(+). Functionally, an aminoacyl-tRNA editing enzyme that deacylates mischarged D-aminoacyl-tRNAs. Also deacylates mischarged glycyl-tRNA(Ala), protecting cells against glycine mischarging by AlaRS. Acts via tRNA-based rather than protein-based catalysis; rejects L-amino acids rather than detecting D-amino acids in the active site. By recycling D-aminoacyl-tRNA to D-amino acids and free tRNA molecules, this enzyme counteracts the toxicity associated with the formation of D-aminoacyl-tRNA entities in vivo and helps enforce protein L-homochirality. This is D-aminoacyl-tRNA deacylase from Streptomyces avermitilis (strain ATCC 31267 / DSM 46492 / JCM 5070 / NBRC 14893 / NCIMB 12804 / NRRL 8165 / MA-4680).